The primary structure comprises 271 residues: Formamidopyrimidine-DNA glycosylase (271 aa).

Proline 2 acts as the Schiff-base intermediate with DNA in catalysis. Catalysis depends on glutamate 3, which acts as the Proton donor. Residue lysine 57 is the Proton donor; for beta-elimination activity of the active site. Residues histidine 90, arginine 109, and lysine 151 each contribute to the DNA site. The FPG-type zinc-finger motif lies at 236–270; that stretch reads HVYGRGGETCTSCGNLLSEIRLGQRTTVFCGICQT. Catalysis depends on arginine 260, which acts as the Proton donor; for delta-elimination activity.

Belongs to the FPG family. In terms of assembly, monomer. The cofactor is Zn(2+).

It catalyses the reaction Hydrolysis of DNA containing ring-opened 7-methylguanine residues, releasing 2,6-diamino-4-hydroxy-5-(N-methyl)formamidopyrimidine.. It carries out the reaction 2'-deoxyribonucleotide-(2'-deoxyribose 5'-phosphate)-2'-deoxyribonucleotide-DNA = a 3'-end 2'-deoxyribonucleotide-(2,3-dehydro-2,3-deoxyribose 5'-phosphate)-DNA + a 5'-end 5'-phospho-2'-deoxyribonucleoside-DNA + H(+). Functionally, involved in base excision repair of DNA damaged by oxidation or by mutagenic agents. Acts as a DNA glycosylase that recognizes and removes damaged bases. Has a preference for oxidized purines, such as 7,8-dihydro-8-oxoguanine (8-oxoG). Has AP (apurinic/apyrimidinic) lyase activity and introduces nicks in the DNA strand. Cleaves the DNA backbone by beta-delta elimination to generate a single-strand break at the site of the removed base with both 3'- and 5'-phosphates. The chain is Formamidopyrimidine-DNA glycosylase from Shewanella sp. (strain W3-18-1).